The chain runs to 243 residues: Cell division protein ZipA (243 aa).

Residues Met-1 to Met-4 are Periplasmic-facing. Residues Ala-5–Phe-25 form a helical membrane-spanning segment. Residues Gly-26–Trp-243 lie on the Cytoplasmic side of the membrane. The disordered stretch occupies residues Lys-30–Lys-89. The span at Arg-35 to Pro-50 shows a compositional bias: basic and acidic residues.

The protein belongs to the ZipA family. As to quaternary structure, interacts with FtsZ via their C-terminal domains.

The protein resides in the cell inner membrane. Functionally, essential cell division protein that stabilizes the FtsZ protofilaments by cross-linking them and that serves as a cytoplasmic membrane anchor for the Z ring. Also required for the recruitment to the septal ring of downstream cell division proteins. This Xanthomonas axonopodis pv. citri (strain 306) protein is Cell division protein ZipA.